The primary structure comprises 208 residues: MARYTGPHCRQCRREGLKLYLKGDRCYTGKCAIDRRSYAPGQHGQGRKKVSEYGIQLRAKQKARRIYGVLEKPFRNYFEHAERQPGITGENLLRLLERRLDNVVYRLGLGASRVEARQLVRHGHFTVNGKKVNIPSFQVRVGDEIAVREKSKASPRIKELVERAADRTTPAWLEYDGQEAKGRVIALPSRDQIDAPVEEHLIVELYSR.

Positions 98–161 constitute an S4 RNA-binding domain; sequence RRLDNVVYRL…KASPRIKELV (64 aa).

This sequence belongs to the universal ribosomal protein uS4 family. In terms of assembly, part of the 30S ribosomal subunit. Contacts protein S5. The interaction surface between S4 and S5 is involved in control of translational fidelity.

Functionally, one of the primary rRNA binding proteins, it binds directly to 16S rRNA where it nucleates assembly of the body of the 30S subunit. Its function is as follows. With S5 and S12 plays an important role in translational accuracy. This Desulforamulus reducens (strain ATCC BAA-1160 / DSM 100696 / MI-1) (Desulfotomaculum reducens) protein is Small ribosomal subunit protein uS4.